The following is a 258-amino-acid chain: uncharacterized protein (258 aa).

The next 3 membrane-spanning stretches (helical) occupy residues Val38–Ala58, Ala72–Ile92, and Phe111–Trp131.

It is found in the cell membrane. This is an uncharacterized protein from Mycoplasma pneumoniae (strain ATCC 29342 / M129 / Subtype 1) (Mycoplasmoides pneumoniae).